The primary structure comprises 177 residues: Peptidyl-tRNA hydrolase (177 aa).

A tRNA-binding site is contributed by Tyr14. His19 functions as the Proton acceptor in the catalytic mechanism. Residues Phe64, Asn66, and Asn112 each contribute to the tRNA site.

This sequence belongs to the PTH family. As to quaternary structure, monomer.

It localises to the cytoplasm. The catalysed reaction is an N-acyl-L-alpha-aminoacyl-tRNA + H2O = an N-acyl-L-amino acid + a tRNA + H(+). Hydrolyzes ribosome-free peptidyl-tRNAs (with 1 or more amino acids incorporated), which drop off the ribosome during protein synthesis, or as a result of ribosome stalling. Its function is as follows. Catalyzes the release of premature peptidyl moieties from peptidyl-tRNA molecules trapped in stalled 50S ribosomal subunits, and thus maintains levels of free tRNAs and 50S ribosomes. The polypeptide is Peptidyl-tRNA hydrolase (Latilactobacillus sakei (Lactobacillus sakei)).